We begin with the raw amino-acid sequence, 444 residues long: Phosphoglucosamine mutase (444 aa).

Ser102 functions as the Phosphoserine intermediate in the catalytic mechanism. The Mg(2+) site is built by Ser102, Asp241, Asp243, and Asp245. Ser102 carries the post-translational modification Phosphoserine.

This sequence belongs to the phosphohexose mutase family. It depends on Mg(2+) as a cofactor. Activated by phosphorylation.

It carries out the reaction alpha-D-glucosamine 1-phosphate = D-glucosamine 6-phosphate. Its function is as follows. Catalyzes the conversion of glucosamine-6-phosphate to glucosamine-1-phosphate. This is Phosphoglucosamine mutase from Leptothrix cholodnii (strain ATCC 51168 / LMG 8142 / SP-6) (Leptothrix discophora (strain SP-6)).